The primary structure comprises 430 residues: UPF0597 protein Clos_2050 (430 aa).

This sequence belongs to the UPF0597 family.

The protein is UPF0597 protein Clos_2050 of Alkaliphilus oremlandii (strain OhILAs) (Clostridium oremlandii (strain OhILAs)).